The sequence spans 228 residues: Translation initiation factor 6 (228 aa).

This sequence belongs to the eIF-6 family.

Its function is as follows. Binds to the 50S ribosomal subunit and prevents its association with the 30S ribosomal subunit to form the 70S initiation complex. The sequence is that of Translation initiation factor 6 from Thermococcus gammatolerans (strain DSM 15229 / JCM 11827 / EJ3).